Consider the following 302-residue polypeptide: MAEILVDKLKEILKEGKLYLNEPMKRHTSFKIGGPADVLAVPGSRDELINLIAYLRQEKIPFFILGNGTNLLVSEKGIRGVVVKLSSLRNVIVEGTKIIAEAGASLSYIANVALVHELTGFEFASGIPGTLGGAIVMNAGAYGSEMKDVVEKVEVLDENNNILILSNQEMKFSYRYSILQEKEWIVLRAWISLERGNYEEIKKKMEELNQRRKEKQPLDYPSAGSTFKRPPGYYAGKLIEDAGLKGYSIGGAKVSEKHSGFIINTGNATFYDVLNLIEYIQKVVKEKFGVELMPEIKIVGEK.

An FAD-binding PCMH-type domain is found at 31 to 196 (KIGGPADVLA…LRAWISLERG (166 aa)). Arg175 is an active-site residue. The active-site Proton donor is Ser225. Residue Glu295 is part of the active site.

This sequence belongs to the MurB family. FAD is required as a cofactor.

It is found in the cytoplasm. The enzyme catalyses UDP-N-acetyl-alpha-D-muramate + NADP(+) = UDP-N-acetyl-3-O-(1-carboxyvinyl)-alpha-D-glucosamine + NADPH + H(+). It participates in cell wall biogenesis; peptidoglycan biosynthesis. Its function is as follows. Cell wall formation. This Caldanaerobacter subterraneus subsp. tengcongensis (strain DSM 15242 / JCM 11007 / NBRC 100824 / MB4) (Thermoanaerobacter tengcongensis) protein is UDP-N-acetylenolpyruvoylglucosamine reductase.